Reading from the N-terminus, the 201-residue chain is uncharacterized protein (201 aa).

This is an uncharacterized protein from Haemophilus influenzae (strain ATCC 51907 / DSM 11121 / KW20 / Rd).